Here is a 318-residue protein sequence, read N- to C-terminus: Probable aminopeptidase YbaC (318 aa).

The active-site Nucleophile is Ser-115. Asp-266 is an active-site residue. His-296 serves as the catalytic Proton donor.

The protein belongs to the peptidase S33 family.

In terms of biological role, probable aminopeptidase. This is Probable aminopeptidase YbaC (ybaC) from Bacillus subtilis (strain 168).